The sequence spans 117 residues: Large ribosomal subunit protein bL20 (117 aa).

The protein belongs to the bacterial ribosomal protein bL20 family.

Binds directly to 23S ribosomal RNA and is necessary for the in vitro assembly process of the 50S ribosomal subunit. It is not involved in the protein synthesizing functions of that subunit. The polypeptide is Large ribosomal subunit protein bL20 (Acetivibrio thermocellus (strain ATCC 27405 / DSM 1237 / JCM 9322 / NBRC 103400 / NCIMB 10682 / NRRL B-4536 / VPI 7372) (Clostridium thermocellum)).